Consider the following 474-residue polypeptide: Probable periplasmic serine endoprotease DegP-like (474 aa).

A signal peptide spans 1–26 (MTRMTRHLALWMLLSLAILASQSAMA). Active-site charge relay system residues include H116, D146, and S219. Substrate contacts are provided by residues 217 to 219 (GNS) and 274 to 278 (LGVMI). PDZ domains lie at 263–354 (LRND…LRNG) and 360–462 (TVTV…YRSG).

The protein belongs to the peptidase S1C family.

Its subcellular location is the periplasm. It catalyses the reaction Acts on substrates that are at least partially unfolded. The cleavage site P1 residue is normally between a pair of hydrophobic residues, such as Val-|-Val.. In terms of biological role, might be efficient in the degradation of transiently denatured and unfolded proteins which accumulate in the periplasm following stress conditions. This chain is Probable periplasmic serine endoprotease DegP-like (mucD), found in Halomonas elongata (strain ATCC 33173 / DSM 2581 / NBRC 15536 / NCIMB 2198 / 1H9).